We begin with the raw amino-acid sequence, 285 residues long: Putative L(+)-tartrate dehydratase subunit alpha (285 aa).

3 residues coordinate iron-sulfur cluster: C60, C182, and C269.

Belongs to the class-I fumarase family. As to quaternary structure, tetramer of two alpha and two beta subunits. It depends on iron-sulfur cluster as a cofactor.

It carries out the reaction (2R,3R)-tartrate = oxaloacetate + H2O. This chain is Putative L(+)-tartrate dehydratase subunit alpha, found in Methanocaldococcus jannaschii (strain ATCC 43067 / DSM 2661 / JAL-1 / JCM 10045 / NBRC 100440) (Methanococcus jannaschii).